The following is a 336-amino-acid chain: Phosphate acyltransferase (336 aa).

Belongs to the PlsX family. As to quaternary structure, homodimer. Probably interacts with PlsY.

It is found in the cytoplasm. It carries out the reaction a fatty acyl-[ACP] + phosphate = an acyl phosphate + holo-[ACP]. It functions in the pathway lipid metabolism; phospholipid metabolism. Its function is as follows. Catalyzes the reversible formation of acyl-phosphate (acyl-PO(4)) from acyl-[acyl-carrier-protein] (acyl-ACP). This enzyme utilizes acyl-ACP as fatty acyl donor, but not acyl-CoA. This Pseudomonas fluorescens (strain ATCC BAA-477 / NRRL B-23932 / Pf-5) protein is Phosphate acyltransferase.